A 786-amino-acid chain; its full sequence is Neprilysin-3 (786 aa).

The Cytoplasmic portion of the chain corresponds to 1-52 (MTRYKQTEFTEDDSSSIGGIQLNEATGHTGMQIRYHTARATWNWRSRNKTEK). Residues 53 to 73 (WLLITTFVMAITIFTLLIVLF) traverse the membrane as a helical; Signal-anchor for type II membrane protein segment. Residues 74–786 (TDGGSSDATK…MNPTEKCEVW (713 aa)) lie on the Extracellular side of the membrane. The Peptidase M13 domain maps to 102 to 786 (PCLNKHCIFA…MNPTEKCEVW (685 aa)). Intrachain disulfides connect C103-C108, C126-C771, C134-C731, C190-C450, and C659-C783. N216, N226, N256, N279, N305, N325, N356, N388, N496, and N569 each carry an N-linked (GlcNAc...) asparagine glycan. H622 is a Zn(2+) binding site. The active site involves E623. Zn(2+) is bound by residues H626 and E682. D686 functions as the Proton donor in the catalytic mechanism. The N-linked (GlcNAc...) asparagine glycan is linked to N715.

This sequence belongs to the peptidase M13 family. Zn(2+) serves as cofactor.

It localises to the cell membrane. It catalyses the reaction Preferential cleavage of polypeptides between hydrophobic residues, particularly with Phe or Tyr at P1'.. Its function is as follows. Metalloendoprotease which is required in the dorsal paired medial neurons for the proper formation of long-term (LTM) and middle-term memories (MTM). Also required in the mushroom body neurons where it functions redundantly with neprilysins Nep2 and Nep4 in normal LTM formation. The polypeptide is Neprilysin-3 (Drosophila melanogaster (Fruit fly)).